The following is a 201-amino-acid chain: Recombination protein RecR (201 aa).

The C4-type zinc finger occupies 57–72; that stretch reads CADCRTFTEQDVCNIC. The region spanning 81–176 is the Toprim domain; sequence GQICVVESPA…SASRIAHGVP (96 aa).

Belongs to the RecR family.

Its function is as follows. May play a role in DNA repair. It seems to be involved in an RecBC-independent recombinational process of DNA repair. It may act with RecF and RecO. The polypeptide is Recombination protein RecR (Enterobacter sp. (strain 638)).